We begin with the raw amino-acid sequence, 360 residues long: Heat-inducible transcription repressor HrcA (360 aa).

This sequence belongs to the HrcA family.

Negative regulator of class I heat shock genes (grpE-dnaK-dnaJ and groELS operons). Prevents heat-shock induction of these operons. The chain is Heat-inducible transcription repressor HrcA from Gloeobacter violaceus (strain ATCC 29082 / PCC 7421).